The sequence spans 342 residues: Glutamyl endopeptidase (342 aa).

An N-terminal signal peptide occupies residues 1–29; it reads MKGKFLKVSSLFVATLTTATLVSSPAANA. The propeptide occupies 30–68; that stretch reads LSSKAMDNHPQQTQSSKQQTPKIKKGGNLKPLEQREHAN. Residues 33–63 are disordered; it reads KAMDNHPQQTQSSKQQTPKIKKGGNLKPLEQ. Positions 39-50 are enriched in low complexity; that stretch reads PQQTQSSKQQTP. Catalysis depends on charge relay system residues histidine 119, aspartate 161, and serine 237. A disordered region spans residues 283–342; the sequence is FANDDQPNNPDNPDNPNNPDNPNNPDNPNNPDEPNNPDNPNNPDNPDNGDNNNSDNPDAA. The span at 286 to 342 shows a compositional bias: low complexity; sequence DDQPNNPDNPDNPNNPDNPNNPDNPNNPDEPNNPDNPNNPDNPDNGDNNNSDNPDAA. Tandem repeats lie at residues 289-291, 292-294, 295-297, 298-300, 301-303, 304-306, 307-309, 310-312, 316-318, 319-321, 322-324, 325-327, and 328-330. A 13 X 3 AA repeats of P-[DN]-N region spans residues 289-330; that stretch reads PNNPDNPDNPNNPDNPNNPDNPNNPDEPNNPDNPNNPDNPDN.

It belongs to the peptidase S1B family. Proteolytically cleaved by aureolysin (aur). This cleavage leads to the activation of SspA.

The protein resides in the secreted. It carries out the reaction Preferential cleavage: Glu-|-Xaa, Asp-|-Xaa.. Preferentially cleaves peptide bonds on the carboxyl-terminal side of aspartate and glutamate. Along with other extracellular proteases it is involved in colonization and infection of human tissues. Required for proteolytic maturation of thiol protease SspB and inactivation of SspC, an inhibitor of SspB. It is the most important protease for degradation of fibronectin-binding protein (FnBP) and surface protein A, which are involved in adherence to host cells. May also protect bacteria against host defense mechanism by cleaving the immunoglobulin classes IgG, IgA and IgM. May be involved in the stability of secreted lipases. The polypeptide is Glutamyl endopeptidase (sspA) (Staphylococcus aureus (strain Mu50 / ATCC 700699)).